Here is a 317-residue protein sequence, read N- to C-terminus: Acetylglutamate kinase (317 aa).

Residues 75-76, Arg97, and Asn196 each bind substrate; that span reads GG.

Belongs to the acetylglutamate kinase family. ArgB subfamily.

The protein localises to the cytoplasm. The enzyme catalyses N-acetyl-L-glutamate + ATP = N-acetyl-L-glutamyl 5-phosphate + ADP. It functions in the pathway amino-acid biosynthesis; L-arginine biosynthesis; N(2)-acetyl-L-ornithine from L-glutamate: step 2/4. In terms of biological role, catalyzes the ATP-dependent phosphorylation of N-acetyl-L-glutamate. The chain is Acetylglutamate kinase from Corynebacterium jeikeium (strain K411).